We begin with the raw amino-acid sequence, 325 residues long: Phosphatidylglycerol--prolipoprotein diacylglyceryl transferase (325 aa).

Transmembrane regions (helical) follow at residues 19–39 (IPLR…VWFG), 47–67 (GGKA…GLVG), 93–113 (IWEG…GAWI), and 119–139 (GIPL…AQAI). Arg141 lines the a 1,2-diacyl-sn-glycero-3-phospho-(1'-sn-glycerol) pocket. 3 helical membrane-spanning segments follow: residues 175–195 (HPTF…VIWA), 207–225 (FALY…EYMR), and 237–257 (LNVW…VISA). The segment covering 266–312 (IVEPDRDATPAEKDGSGEDGSGEKGVAKADAAAKDPLTKDEPGKDAT) has biased composition (basic and acidic residues). Residues 266 to 325 (IVEPDRDATPAEKDGSGEDGSGEKGVAKADAAAKDPLTKDEPGKDATAENAGAAGAAEKA) are disordered. A compositionally biased stretch (low complexity) spans 313 to 325 (AENAGAAGAAEKA).

It belongs to the Lgt family.

The protein resides in the cell membrane. The enzyme catalyses L-cysteinyl-[prolipoprotein] + a 1,2-diacyl-sn-glycero-3-phospho-(1'-sn-glycerol) = an S-1,2-diacyl-sn-glyceryl-L-cysteinyl-[prolipoprotein] + sn-glycerol 1-phosphate + H(+). It functions in the pathway protein modification; lipoprotein biosynthesis (diacylglyceryl transfer). In terms of biological role, catalyzes the transfer of the diacylglyceryl group from phosphatidylglycerol to the sulfhydryl group of the N-terminal cysteine of a prolipoprotein, the first step in the formation of mature lipoproteins. This chain is Phosphatidylglycerol--prolipoprotein diacylglyceryl transferase, found in Streptomyces griseus subsp. griseus (strain JCM 4626 / CBS 651.72 / NBRC 13350 / KCC S-0626 / ISP 5235).